The primary structure comprises 349 residues: Interferon-stimulated 20 kDa exonuclease-like 2 (349 aa).

Disordered regions lie at residues 1–100 (MSTL…AAVP) and 126–166 (ALPK…KYSG). Residues 14-23 (PPKKALEGNA) are compositionally biased toward basic and acidic residues. Basic residues predominate over residues 24 to 47 (KHRKFVKKRRLLERKGFLNKKKQP). Positions 54 to 66 (LHSEPSQKGETPR) are enriched in basic and acidic residues. Residues 70 to 87 (TWKATPLPKKKTTAASSS) show a composition bias toward low complexity. The segment covering 130–142 (IKSHPTRPQKKGS) has biased composition (basic residues). Residues 175–331 (MVAIDCEMVG…EDAQATMELY (157 aa)) enclose the Exonuclease domain.

It localises to the nucleus. Its subcellular location is the nucleolus. Its function is as follows. 3'-&gt; 5'-exoribonuclease involved in ribosome biogenesis in the processing of the 12S pre-rRNA. Displays a strong specificity for a 3'-end containing a free hydroxyl group. The chain is Interferon-stimulated 20 kDa exonuclease-like 2 (ISG20L2) from Bos taurus (Bovine).